The chain runs to 772 residues: Subtilisin-like protease SBT5.3 (772 aa).

A signal peptide spans 1–25 (MKLTHNFSFLLLLLLVHMSSKHILA). One can recognise an Inhibitor I9 domain in the interval 31 to 116 (SYVVYFGAHS…VFPNKALKLH (86 aa)). Residues 120–628 (SWDFLGLEHN…AGHVQPNLAV (509 aa)) form the Peptidase S8 domain. Catalysis depends on Asp153, which acts as the Charge relay system. An N-linked (GlcNAc...) asparagine glycan is attached at Asn211. The active-site Charge relay system is the His223. N-linked (GlcNAc...) asparagine glycans are attached at residues Asn246, Asn306, and Asn396. The region spanning 398 to 480 (SALDAQLCKL…KDSFAVSRYI (83 aa)) is the PA domain. The active-site Charge relay system is the Ser561. N-linked (GlcNAc...) asparagine glycans are attached at residues Asn606, Asn651, Asn662, Asn684, and Asn725.

It belongs to the peptidase S8 family. As to expression, expressed specifically at sites of lateral root emergence.

It localises to the secreted. Its subcellular location is the cell wall. Functionally, serine protease. Has a substrate preference for the hydrophobic residues Phe and Ala and the basic residue Asp in the P1 position, and for Asp, Leu or Ala in the P1' position. May play a role in the degradation of structural proteins in the extracellular matrix of cells located above sites of lateral root formation and thus facilitate lateral root emergence. This is Subtilisin-like protease SBT5.3 (AIR3) from Arabidopsis thaliana (Mouse-ear cress).